Consider the following 410-residue polypeptide: Kynureninase (410 aa).

Pyridoxal 5'-phosphate is bound by residues threonine 108, serine 109, 135–138 (FPTD), threonine 176, aspartate 205, histidine 208, and tyrosine 230. The residue at position 231 (lysine 231) is an N6-(pyridoxal phosphate)lysine. Positions 260 and 286 each coordinate pyridoxal 5'-phosphate.

The protein belongs to the kynureninase family. In terms of assembly, homodimer. Requires pyridoxal 5'-phosphate as cofactor.

It catalyses the reaction L-kynurenine + H2O = anthranilate + L-alanine + H(+). It carries out the reaction 3-hydroxy-L-kynurenine + H2O = 3-hydroxyanthranilate + L-alanine + H(+). It functions in the pathway amino-acid degradation; L-kynurenine degradation; L-alanine and anthranilate from L-kynurenine: step 1/1. It participates in cofactor biosynthesis; NAD(+) biosynthesis; quinolinate from L-kynurenine: step 2/3. Catalyzes the cleavage of L-kynurenine (L-Kyn) and L-3-hydroxykynurenine (L-3OHKyn) into anthranilic acid (AA) and 3-hydroxyanthranilic acid (3-OHAA), respectively. The polypeptide is Kynureninase (Deinococcus radiodurans (strain ATCC 13939 / DSM 20539 / JCM 16871 / CCUG 27074 / LMG 4051 / NBRC 15346 / NCIMB 9279 / VKM B-1422 / R1)).